A 461-amino-acid chain; its full sequence is Photosystem II CP43 reaction center protein (461 aa).

Positions methionine 1–glutamate 2 are excised as a propeptide. Position 3 is an N-acetylthreonine (threonine 3). The residue at position 3 (threonine 3) is a Phosphothreonine. The next 5 helical transmembrane spans lie at leucine 57–alanine 81, leucine 122–asparagine 143, lysine 166–threonine 188, glutamine 243–serine 263, and tryptophan 279–serine 300. [CaMn4O5] cluster is bound at residue glutamate 355. The helical transmembrane segment at arginine 435 to proline 459 threads the bilayer.

This sequence belongs to the PsbB/PsbC family. PsbC subfamily. PSII is composed of 1 copy each of membrane proteins PsbA, PsbB, PsbC, PsbD, PsbE, PsbF, PsbH, PsbI, PsbJ, PsbK, PsbL, PsbM, PsbT, PsbX, PsbY, PsbZ, Psb30/Ycf12, at least 3 peripheral proteins of the oxygen-evolving complex and a large number of cofactors. It forms dimeric complexes. Binds multiple chlorophylls and provides some of the ligands for the Ca-4Mn-5O cluster of the oxygen-evolving complex. It may also provide a ligand for a Cl- that is required for oxygen evolution. PSII binds additional chlorophylls, carotenoids and specific lipids. serves as cofactor.

It localises to the plastid. The protein resides in the chloroplast thylakoid membrane. Its function is as follows. One of the components of the core complex of photosystem II (PSII). It binds chlorophyll and helps catalyze the primary light-induced photochemical processes of PSII. PSII is a light-driven water:plastoquinone oxidoreductase, using light energy to abstract electrons from H(2)O, generating O(2) and a proton gradient subsequently used for ATP formation. The sequence is that of Photosystem II CP43 reaction center protein from Stigeoclonium helveticum (Green alga).